Reading from the N-terminus, the 235-residue chain is Phosphoribosylaminoimidazole-succinocarboxamide synthase (235 aa).

The protein belongs to the SAICAR synthetase family.

It carries out the reaction 5-amino-1-(5-phospho-D-ribosyl)imidazole-4-carboxylate + L-aspartate + ATP = (2S)-2-[5-amino-1-(5-phospho-beta-D-ribosyl)imidazole-4-carboxamido]succinate + ADP + phosphate + 2 H(+). It participates in purine metabolism; IMP biosynthesis via de novo pathway; 5-amino-1-(5-phospho-D-ribosyl)imidazole-4-carboxamide from 5-amino-1-(5-phospho-D-ribosyl)imidazole-4-carboxylate: step 1/2. The sequence is that of Phosphoribosylaminoimidazole-succinocarboxamide synthase from Streptococcus thermophilus (strain CNRZ 1066).